Here is a 750-residue protein sequence, read N- to C-terminus: Photosystem I P700 chlorophyll a apoprotein A1 (750 aa).

8 consecutive transmembrane segments (helical) span residues 70-93 (VFSAHFGQLSIIFLWLSGMYFHGA), 156-179 (LYCTAIGALVFAALMLFAGWFHYH), 195-219 (LNHHLAGLLGLGSLSWAGHQVHVSL), 291-309 (IAHHHLAIAILFLIAGHMY), 346-369 (WHAQLSLNLAMLGSLTIVVAHHMY), 385-411 (LSLFTHHMWIGGFLIVGAAAHAAIFMV), 433-455 (AIISHLNWVCIFLGFHSFGLYIH), and 531-549 (FLVHHIHAFTIHVTVLILL). [4Fe-4S] cluster is bound by residues cysteine 573 and cysteine 582. The next 2 membrane-spanning stretches (helical) occupy residues 589–610 (HVFLGLFWMYNAISVVIFHFSW) and 664–686 (LSAYGLFFLGAHFVWAFSLMFLF). Histidine 675 is a chlorophyll a' binding site. Methionine 683 and tyrosine 691 together coordinate chlorophyll a. Tryptophan 692 is a phylloquinone binding site. The helical transmembrane segment at 724–744 (AVGVTHYLLGGIATTWAFFLA) threads the bilayer.

Belongs to the PsaA/PsaB family. As to quaternary structure, the PsaA/B heterodimer binds the P700 chlorophyll special pair and subsequent electron acceptors. PSI consists of a core antenna complex that captures photons, and an electron transfer chain that converts photonic excitation into a charge separation. The eukaryotic PSI reaction center is composed of at least 11 subunits. P700 is a chlorophyll a/chlorophyll a' dimer, A0 is one or more chlorophyll a, A1 is one or both phylloquinones and FX is a shared 4Fe-4S iron-sulfur center. serves as cofactor.

The protein resides in the plastid. The protein localises to the chloroplast thylakoid membrane. It carries out the reaction reduced [plastocyanin] + hnu + oxidized [2Fe-2S]-[ferredoxin] = oxidized [plastocyanin] + reduced [2Fe-2S]-[ferredoxin]. Its function is as follows. PsaA and PsaB bind P700, the primary electron donor of photosystem I (PSI), as well as the electron acceptors A0, A1 and FX. PSI is a plastocyanin-ferredoxin oxidoreductase, converting photonic excitation into a charge separation, which transfers an electron from the donor P700 chlorophyll pair to the spectroscopically characterized acceptors A0, A1, FX, FA and FB in turn. Oxidized P700 is reduced on the lumenal side of the thylakoid membrane by plastocyanin. This is Photosystem I P700 chlorophyll a apoprotein A1 from Nasturtium officinale (Watercress).